Reading from the N-terminus, the 150-residue chain is Cytochrome c oxidase subunit 5A, mitochondrial (150 aa).

The transit peptide at 1 to 41 directs the protein to the mitochondrion; the sequence is MLGAALRRCAVAAAARAGPRGLLHSAPTPGPAAAIQSVRCY. An SIFI-degron motif is present at residues 2–17; it reads LGAALRRCAVAAAARA. N6-acetyllysine is present on residues Lys87 and Lys113. Phosphothreonine is present on Thr141.

Belongs to the cytochrome c oxidase subunit 5A family. Component of the cytochrome c oxidase (complex IV, CIV), a multisubunit enzyme composed of 14 subunits. The complex is composed of a catalytic core of 3 subunits MT-CO1, MT-CO2 and MT-CO3, encoded in the mitochondrial DNA, and 11 supernumerary subunits COX4I, COX5A, COX5B, COX6A, COX6B, COX6C, COX7A, COX7B, COX7C, COX8 and NDUFA4, which are encoded in the nuclear genome. The complex exists as a monomer or a dimer and forms supercomplexes (SCs) in the inner mitochondrial membrane with NADH-ubiquinone oxidoreductase (complex I, CI) and ubiquinol-cytochrome c oxidoreductase (cytochrome b-c1 complex, complex III, CIII), resulting in different assemblies (supercomplex SCI(1)III(2)IV(1) and megacomplex MCI(2)III(2)IV(2)). Interacts with AFG1L. Interacts with RAB5IF. In terms of processing, in response to mitochondrial stress, the precursor protein is ubiquitinated by the SIFI complex in the cytoplasm before mitochondrial import, leading to its degradation. Within the SIFI complex, UBR4 initiates ubiquitin chain that are further elongated or branched by KCMF1.

It localises to the mitochondrion inner membrane. It participates in energy metabolism; oxidative phosphorylation. Its function is as follows. Component of the cytochrome c oxidase, the last enzyme in the mitochondrial electron transport chain which drives oxidative phosphorylation. The respiratory chain contains 3 multisubunit complexes succinate dehydrogenase (complex II, CII), ubiquinol-cytochrome c oxidoreductase (cytochrome b-c1 complex, complex III, CIII) and cytochrome c oxidase (complex IV, CIV), that cooperate to transfer electrons derived from NADH and succinate to molecular oxygen, creating an electrochemical gradient over the inner membrane that drives transmembrane transport and the ATP synthase. Cytochrome c oxidase is the component of the respiratory chain that catalyzes the reduction of oxygen to water. Electrons originating from reduced cytochrome c in the intermembrane space (IMS) are transferred via the dinuclear copper A center (CU(A)) of subunit 2 and heme A of subunit 1 to the active site in subunit 1, a binuclear center (BNC) formed by heme A3 and copper B (CU(B)). The BNC reduces molecular oxygen to 2 water molecules using 4 electrons from cytochrome c in the IMS and 4 protons from the mitochondrial matrix. This chain is Cytochrome c oxidase subunit 5A, mitochondrial (COX5A), found in Plecturocebus donacophilus (Bolivian gray titi monkey).